Consider the following 86-residue polypeptide: RNA-binding protein Hfq (86 aa).

In terms of domain architecture, Sm spans 12-73 (DIFLNQVRKE…ISTISPQKPV (62 aa)).

The protein belongs to the Hfq family. As to quaternary structure, homohexamer.

RNA chaperone that binds small regulatory RNA (sRNAs) and mRNAs to facilitate mRNA translational regulation in response to envelope stress, environmental stress and changes in metabolite concentrations. Also binds with high specificity to tRNAs. This chain is RNA-binding protein Hfq, found in Caldanaerobacter subterraneus subsp. tengcongensis (strain DSM 15242 / JCM 11007 / NBRC 100824 / MB4) (Thermoanaerobacter tengcongensis).